Here is a 415-residue protein sequence, read N- to C-terminus: Glucose-6-phosphate isomerase (415 aa).

Residue glutamate 267 is the Proton donor of the active site. Active-site residues include histidine 293 and lysine 406.

This sequence belongs to the GPI family.

The protein localises to the cytoplasm. It carries out the reaction alpha-D-glucose 6-phosphate = beta-D-fructose 6-phosphate. Its pathway is carbohydrate biosynthesis; gluconeogenesis. It participates in carbohydrate degradation; glycolysis; D-glyceraldehyde 3-phosphate and glycerone phosphate from D-glucose: step 2/4. Functionally, catalyzes the reversible isomerization of glucose-6-phosphate to fructose-6-phosphate. The chain is Glucose-6-phosphate isomerase from Thermus thermophilus (strain ATCC 27634 / DSM 579 / HB8).